Consider the following 82-residue polypeptide: Small ribosomal subunit protein bS18 (82 aa).

A compositionally biased stretch (polar residues) spans 1–10 (MTDTNQNSSR). The segment at 1–21 (MTDTNQNSSRRPFHRRRKTCP) is disordered.

The protein belongs to the bacterial ribosomal protein bS18 family. Part of the 30S ribosomal subunit. Forms a tight heterodimer with protein bS6.

Functionally, binds as a heterodimer with protein bS6 to the central domain of the 16S rRNA, where it helps stabilize the platform of the 30S subunit. The sequence is that of Small ribosomal subunit protein bS18 from Bartonella tribocorum (strain CIP 105476 / IBS 506).